We begin with the raw amino-acid sequence, 544 residues long: CTP synthase (544 aa).

Residues 1-265 (MTKFIFVTGG…DDIICEHLDL (265 aa)) form an amidoligase domain region. Ser13 provides a ligand contact to CTP. Ser13 lines the UTP pocket. ATP contacts are provided by residues 14–19 (SLGKGI) and Asp71. Mg(2+)-binding residues include Asp71 and Glu139. Residues 146–148 (DIE), 186–191 (KTKPTQ), and Lys222 contribute to the CTP site. Residues 186–191 (KTKPTQ) and Lys222 contribute to the UTP site. Residues 290-542 (NIAMVGKYVD…VEAALAYQAD (253 aa)) enclose the Glutamine amidotransferase type-1 domain. Gly351 contributes to the L-glutamine binding site. The active-site Nucleophile; for glutamine hydrolysis is the Cys378. L-glutamine is bound by residues 379–382 (LGMQ), Glu402, and Arg469. Catalysis depends on residues His515 and Glu517.

It belongs to the CTP synthase family. Homotetramer.

It catalyses the reaction UTP + L-glutamine + ATP + H2O = CTP + L-glutamate + ADP + phosphate + 2 H(+). The enzyme catalyses L-glutamine + H2O = L-glutamate + NH4(+). The catalysed reaction is UTP + NH4(+) + ATP = CTP + ADP + phosphate + 2 H(+). The protein operates within pyrimidine metabolism; CTP biosynthesis via de novo pathway; CTP from UDP: step 2/2. Its activity is regulated as follows. Allosterically activated by GTP, when glutamine is the substrate; GTP has no effect on the reaction when ammonia is the substrate. The allosteric effector GTP functions by stabilizing the protein conformation that binds the tetrahedral intermediate(s) formed during glutamine hydrolysis. Inhibited by the product CTP, via allosteric rather than competitive inhibition. Catalyzes the ATP-dependent amination of UTP to CTP with either L-glutamine or ammonia as the source of nitrogen. Regulates intracellular CTP levels through interactions with the four ribonucleotide triphosphates. The sequence is that of CTP synthase from Laribacter hongkongensis (strain HLHK9).